Reading from the N-terminus, the 31-residue chain is Photosystem I reaction center subunit XII (31 aa).

The helical transmembrane segment at 6–25 (TQILAALVVALLPAFLAFRL) threads the bilayer.

The protein belongs to the PsaM family.

The protein localises to the cellular thylakoid membrane. The protein is Photosystem I reaction center subunit XII of Synechocystis sp. (strain ATCC 27184 / PCC 6803 / Kazusa).